Here is a 376-residue protein sequence, read N- to C-terminus: UDP-N-acetylglucosamine 2-epimerase (376 aa).

Residues Arg10, Lys15, Asp95, Glu117, His213, Gln271, Phe276, 290 to 292 (SGG), Glu296, and Arg313 each bind substrate.

It belongs to the UDP-N-acetylglucosamine 2-epimerase family. Homodimer.

It is found in the cytoplasm. The catalysed reaction is UDP-N-acetyl-alpha-D-glucosamine = UDP-N-acetyl-alpha-D-mannosamine. The protein operates within bacterial outer membrane biogenesis; enterobacterial common antigen biosynthesis. Catalyzes the reversible epimerization at C-2 of UDP-N-acetylglucosamine (UDP-GlcNAc) and thereby provides bacteria with UDP-N-acetylmannosamine (UDP-ManNAc), the activated donor of ManNAc residues. This Salmonella typhimurium (strain LT2 / SGSC1412 / ATCC 700720) protein is UDP-N-acetylglucosamine 2-epimerase.